We begin with the raw amino-acid sequence, 382 residues long: Lipid-A-disaccharide synthase (382 aa).

The protein belongs to the LpxB family.

It catalyses the reaction a lipid X + a UDP-2-N,3-O-bis[(3R)-3-hydroxyacyl]-alpha-D-glucosamine = a lipid A disaccharide + UDP + H(+). It participates in bacterial outer membrane biogenesis; LPS lipid A biosynthesis. Functionally, condensation of UDP-2,3-diacylglucosamine and 2,3-diacylglucosamine-1-phosphate to form lipid A disaccharide, a precursor of lipid A, a phosphorylated glycolipid that anchors the lipopolysaccharide to the outer membrane of the cell. The polypeptide is Lipid-A-disaccharide synthase (Alkalilimnicola ehrlichii (strain ATCC BAA-1101 / DSM 17681 / MLHE-1)).